The sequence spans 334 residues: Beta-hexosaminidase (334 aa).

Substrate contacts are provided by residues Asp62, Arg70, Arg130, and Lys160–His161. His173 (proton donor/acceptor) is an active-site residue. The active-site Nucleophile is the Asp243.

Belongs to the glycosyl hydrolase 3 family. NagZ subfamily.

The protein resides in the cytoplasm. It catalyses the reaction Hydrolysis of terminal non-reducing N-acetyl-D-hexosamine residues in N-acetyl-beta-D-hexosaminides.. The protein operates within cell wall biogenesis; peptidoglycan recycling. Its function is as follows. Plays a role in peptidoglycan recycling by cleaving the terminal beta-1,4-linked N-acetylglucosamine (GlcNAc) from peptide-linked peptidoglycan fragments, giving rise to free GlcNAc, anhydro-N-acetylmuramic acid and anhydro-N-acetylmuramic acid-linked peptides. This is Beta-hexosaminidase from Photobacterium profundum (strain SS9).